Consider the following 346-residue polypeptide: Upstream stimulatory factor 2 (346 aa).

2 disordered regions span residues 1-44 and 215-244; these read MDML…PGAE and APRTHPYSPKIDGTRTPRDERRRAQHNEVE. Low complexity predominate over residues 11-20; the sequence is AASATAAAAA. Over residues 226–244 the composition is skewed to basic and acidic residues; it reads DGTRTPRDERRRAQHNEVE. One can recognise a bHLH domain in the interval 235–290; the sequence is RRRAQHNEVERRRRDKINNWIVQLSKIIPDCNADNSKTGASKGGILSKACDYIREL. Residues 307-328 are leucine-zipper; that stretch reads LQMDNELLRQQIEELKNENALL.

Interacts with MAF. Efficient DNA binding requires dimerization with another bHLH protein. Binds DNA as a homodimer or a heterodimer (USF1/USF2). In vivo, the USF1/USF2A heterodimer represents over 66% of the usf binding activity whereas the USF1 and USF2A homodimers represent less than 10%. The USF1/USF2B heterodimer accounted for almost 15% in some cell. Ubiquitous.

Its subcellular location is the nucleus. Functionally, transcription factor that binds to a symmetrical DNA sequence (E-boxes) (5'-CACGTG-3') that is found in a variety of viral and cellular promoters. The protein is Upstream stimulatory factor 2 (USF2) of Homo sapiens (Human).